The primary structure comprises 400 residues: Phosphoglycerate kinase (400 aa).

Substrate is bound by residues 22–24, arginine 38, 61–64, arginine 119, and arginine 152; these read DFN and HLGR. Residues lysine 205, glycine 296, glutamate 327, and 353 to 356 contribute to the ATP site; that span reads GGDT.

Belongs to the phosphoglycerate kinase family. In terms of assembly, monomer.

Its subcellular location is the cytoplasm. It catalyses the reaction (2R)-3-phosphoglycerate + ATP = (2R)-3-phospho-glyceroyl phosphate + ADP. It participates in carbohydrate degradation; glycolysis; pyruvate from D-glyceraldehyde 3-phosphate: step 2/5. This is Phosphoglycerate kinase from Campylobacter jejuni subsp. jejuni serotype O:6 (strain 81116 / NCTC 11828).